The primary structure comprises 539 residues: Chaperonin GroEL (539 aa).

Residues 30 to 33 (TLGP), Lys51, 87 to 91 (DGTTT), Gly415, and Asp495 contribute to the ATP site.

Belongs to the chaperonin (HSP60) family. As to quaternary structure, forms a cylinder of 14 subunits composed of two heptameric rings stacked back-to-back. Interacts with the co-chaperonin GroES.

The protein resides in the cytoplasm. The enzyme catalyses ATP + H2O + a folded polypeptide = ADP + phosphate + an unfolded polypeptide.. Functionally, together with its co-chaperonin GroES, plays an essential role in assisting protein folding. The GroEL-GroES system forms a nano-cage that allows encapsulation of the non-native substrate proteins and provides a physical environment optimized to promote and accelerate protein folding. This is Chaperonin GroEL from Serratia rubidaea (Serratia marinorubra).